Here is a 426-residue protein sequence, read N- to C-terminus: L-cysteine:1D-myo-inositol 2-amino-2-deoxy-alpha-D-glucopyranoside ligase (426 aa).

Residue Cys-43 coordinates Zn(2+). L-cysteinyl-5'-AMP is bound by residues 43–46 (CGIT), Ser-58, and 81–83 (NVT). The 'HIGH' region signature appears at 45-55 (ITPYDATHMGH). The 'ERGGDP' region signature appears at 200 to 205 (ERGGDP). Trp-241 serves as a coordination point for L-cysteinyl-5'-AMP. A Zn(2+)-binding site is contributed by Cys-245. Residue 263 to 265 (GSD) coordinates L-cysteinyl-5'-AMP. His-270 is a Zn(2+) binding site. Val-296 lines the L-cysteinyl-5'-AMP pocket. Residues 302-306 (KMSKS) carry the 'KMSKS' region motif.

The protein belongs to the class-I aminoacyl-tRNA synthetase family. MshC subfamily. As to quaternary structure, monomer. Zn(2+) serves as cofactor.

It catalyses the reaction 1D-myo-inositol 2-amino-2-deoxy-alpha-D-glucopyranoside + L-cysteine + ATP = 1D-myo-inositol 2-(L-cysteinylamino)-2-deoxy-alpha-D-glucopyranoside + AMP + diphosphate + H(+). In terms of biological role, catalyzes the ATP-dependent condensation of GlcN-Ins and L-cysteine to form L-Cys-GlcN-Ins. This is L-cysteine:1D-myo-inositol 2-amino-2-deoxy-alpha-D-glucopyranoside ligase from Arthrobacter sp. (strain FB24).